Reading from the N-terminus, the 485-residue chain is Adenosylhomocysteinase (485 aa).

The substrate site is built by T64, D139, and E205. 206–208 (TTT) is a binding site for NAD(+). Substrate-binding residues include K235 and D239. NAD(+)-binding positions include N240, 269–274 (GYGDVG), E292, N327, and 348–350 (IGH).

The protein belongs to the adenosylhomocysteinase family. Homotetramer. NAD(+) is required as a cofactor.

The catalysed reaction is S-adenosyl-L-homocysteine + H2O = L-homocysteine + adenosine. Its pathway is amino-acid biosynthesis; L-homocysteine biosynthesis; L-homocysteine from S-adenosyl-L-homocysteine: step 1/1. Adenosylhomocysteine is a competitive inhibitor of S-adenosyl-L-methionine-dependent methyl transferase reactions; therefore adenosylhomocysteinase may play a key role in the control of methylations via regulation of the intracellular concentration of adenosylhomocysteine. In Mesembryanthemum crystallinum (Common ice plant), this protein is Adenosylhomocysteinase (SAHH).